A 459-amino-acid polypeptide reads, in one-letter code: Argininosuccinate lyase (459 aa).

This sequence belongs to the lyase 1 family. Argininosuccinate lyase subfamily.

Its subcellular location is the cytoplasm. It catalyses the reaction 2-(N(omega)-L-arginino)succinate = fumarate + L-arginine. The protein operates within amino-acid biosynthesis; L-arginine biosynthesis; L-arginine from L-ornithine and carbamoyl phosphate: step 3/3. The sequence is that of Argininosuccinate lyase from Geobacillus kaustophilus (strain HTA426).